The sequence spans 838 residues: Semaphorin-4G (838 aa).

The N-terminal stretch at 1–17 (MWGRLWPLLLSILTATA) is a signal peptide. Residues 18–675 (VPGPSLRRPS…GAQLAPDVRL (658 aa)) lie on the Extracellular side of the membrane. One can recognise a Sema domain in the interval 35 to 505 (RMTIPYEELS…APSGVIQLPL (471 aa)). N-linked (GlcNAc...) asparagine glycans are attached at residues N55, N111, and N126. A disulfide bridge links C104 with C115. Intrachain disulfides connect C133/C142, C270/C377, and C294/C337. Residue N388 is glycosylated (N-linked (GlcNAc...) asparagine). Positions 507-558 (SCSRYRSCYDCILARDPYCGWDPGTHACAAATTIANRTALIQDIERGNRGCE) constitute a PSI domain. 2 disulfides stabilise this stretch: C508–C525 and C517–C534. Residues N542 and N598 are each glycosylated (N-linked (GlcNAc...) asparagine). The region spanning 567-649 (PPLKTRSVLR…RTLLASYSLT (83 aa)) is the Ig-like C2-type domain. Cysteines 584 and 632 form a disulfide. The chain crosses the membrane as a helical span at residues 676-696 (LYVLAIAALGGLCLILASSLL). The Cytoplasmic portion of the chain corresponds to 697–838 (YVACLREGRR…LVEQLDESSV (142 aa)). Residues 723-777 (SAVQLQTVSGQCPGEEDEGDDEGAGGLEGSCLQIIPGEGAPAPPPPPPPPPPAEL) are disordered. The span at 736-745 (GEEDEGDDEG) shows a compositional bias: acidic residues. The segment covering 763–775 (PAPPPPPPPPPPA) has biased composition (pro residues). Phosphoserine is present on residues S795 and S837.

The protein belongs to the semaphorin family. Interacts with PLXNB2.

Its subcellular location is the cell membrane. In terms of biological role, cell surface receptor for PLXNB2. May play a role in axon guidance. This Homo sapiens (Human) protein is Semaphorin-4G (SEMA4G).